The following is a 311-amino-acid chain: Malate dehydrogenase (311 aa).

NAD(+) is bound by residues 7–13 (GAAGGIG) and Asp-34. Substrate contacts are provided by Arg-81 and Arg-87. NAD(+) is bound by residues Asn-94 and 117 to 119 (ITN). Residues Asn-119 and Arg-153 each contribute to the substrate site. His-177 acts as the Proton acceptor in catalysis. Met-227 contributes to the NAD(+) binding site.

This sequence belongs to the LDH/MDH superfamily. MDH type 1 family. As to quaternary structure, homodimer.

The enzyme catalyses (S)-malate + NAD(+) = oxaloacetate + NADH + H(+). Catalyzes the reversible oxidation of malate to oxaloacetate. The sequence is that of Malate dehydrogenase from Shewanella baltica (strain OS223).